The primary structure comprises 495 residues: Cytochrome P450 Tp4149 (495 aa).

A run of 2 helical transmembrane segments spans residues 4–24 (ILSLETLLISWLSSFILMFFI) and 208–228 (YLSMFNLFSVGSYIPWLSWVD). Asn-419 carries N-linked (GlcNAc...) asparagine glycosylation. Cys-437 contacts heme.

The protein belongs to the cytochrome P450 family. The cofactor is heme.

The protein localises to the membrane. It functions in the pathway secondary metabolite biosynthesis; terpenoid biosynthesis. In terms of biological role, probably involved in the biosynthesis of germacrene-derived sesquiterpene lactones. This is Cytochrome P450 Tp4149 from Tanacetum parthenium (Feverfew).